Reading from the N-terminus, the 372-residue chain is Queuine tRNA-ribosyltransferase (372 aa).

Catalysis depends on D92, which acts as the Proton acceptor. Substrate-binding positions include 92-96 (DSGGF), D146, Q188, and G215. Positions 246–252 (GIGTLRE) are RNA binding. The active-site Nucleophile is D265. The tract at residues 270-274 (TRLGR) is RNA binding; important for wobble base 34 recognition. Zn(2+) is bound by residues C303, C305, C308, and H334.

It belongs to the queuine tRNA-ribosyltransferase family. Homodimer. Within each dimer, one monomer is responsible for RNA recognition and catalysis, while the other monomer binds to the replacement base PreQ1. Zn(2+) is required as a cofactor.

It carries out the reaction 7-aminomethyl-7-carbaguanine + guanosine(34) in tRNA = 7-aminomethyl-7-carbaguanosine(34) in tRNA + guanine. The protein operates within tRNA modification; tRNA-queuosine biosynthesis. In terms of biological role, catalyzes the base-exchange of a guanine (G) residue with the queuine precursor 7-aminomethyl-7-deazaguanine (PreQ1) at position 34 (anticodon wobble position) in tRNAs with GU(N) anticodons (tRNA-Asp, -Asn, -His and -Tyr). Catalysis occurs through a double-displacement mechanism. The nucleophile active site attacks the C1' of nucleotide 34 to detach the guanine base from the RNA, forming a covalent enzyme-RNA intermediate. The proton acceptor active site deprotonates the incoming PreQ1, allowing a nucleophilic attack on the C1' of the ribose to form the product. After dissociation, two additional enzymatic reactions on the tRNA convert PreQ1 to queuine (Q), resulting in the hypermodified nucleoside queuosine (7-(((4,5-cis-dihydroxy-2-cyclopenten-1-yl)amino)methyl)-7-deazaguanosine). This Prochlorococcus marinus (strain MIT 9313) protein is Queuine tRNA-ribosyltransferase.